The chain runs to 309 residues: Elongation factor Ts (309 aa).

The tract at residues T82–V85 is involved in Mg(2+) ion dislocation from EF-Tu.

This sequence belongs to the EF-Ts family.

It localises to the cytoplasm. Functionally, associates with the EF-Tu.GDP complex and induces the exchange of GDP to GTP. It remains bound to the aminoacyl-tRNA.EF-Tu.GTP complex up to the GTP hydrolysis stage on the ribosome. This Rickettsia typhi (strain ATCC VR-144 / Wilmington) protein is Elongation factor Ts.